The sequence spans 499 residues: Probable cytosol aminopeptidase (499 aa).

Residues lysine 263 and aspartate 268 each coordinate Mn(2+). Lysine 275 is an active-site residue. Positions 286, 345, and 347 each coordinate Mn(2+). Arginine 349 is a catalytic residue.

The protein belongs to the peptidase M17 family. Requires Mn(2+) as cofactor.

It is found in the cytoplasm. It catalyses the reaction Release of an N-terminal amino acid, Xaa-|-Yaa-, in which Xaa is preferably Leu, but may be other amino acids including Pro although not Arg or Lys, and Yaa may be Pro. Amino acid amides and methyl esters are also readily hydrolyzed, but rates on arylamides are exceedingly low.. The enzyme catalyses Release of an N-terminal amino acid, preferentially leucine, but not glutamic or aspartic acids.. Presumably involved in the processing and regular turnover of intracellular proteins. Catalyzes the removal of unsubstituted N-terminal amino acids from various peptides. The sequence is that of Probable cytosol aminopeptidase from Chlamydia trachomatis serovar L2 (strain ATCC VR-902B / DSM 19102 / 434/Bu).